The chain runs to 404 residues: Diphosphomevalonate decarboxylase mvd1 (404 aa).

(R)-5-diphosphomevalonate contacts are provided by residues Y25–K28, R82, S161–R166, and T217.

This sequence belongs to the diphosphomevalonate decarboxylase family. Homodimer.

It catalyses the reaction (R)-5-diphosphomevalonate + ATP = isopentenyl diphosphate + ADP + phosphate + CO2. The protein operates within isoprenoid biosynthesis; isopentenyl diphosphate biosynthesis via mevalonate pathway; isopentenyl diphosphate from (R)-mevalonate: step 3/3. Functionally, diphosphomevalonate decarboxylase; part of the second module of ergosterol biosynthesis pathway that includes the middle steps of the pathway. Mvd1 converts diphosphomevalonate into isopentenyl diphosphate. The second module is carried out in the vacuole and involves the formation of farnesyl diphosphate, which is also an important intermediate in the biosynthesis of ubiquinone, dolichol, heme and prenylated proteins. Activity by the mevalonate kinase erg12 (AFUA_4G07780) first converts mevalonate into 5-phosphomevalonate. 5-phosphomevalonate is then further converted to 5-diphosphomevalonate by the phosphomevalonate kinase erg8 (AFUA_5G10680). The diphosphomevalonate decarboxylase mvd1 (AFUA_4G07130) then produces isopentenyl diphosphate. The isopentenyl-diphosphate delta-isomerase idi1 (AFUA_6G11160) then catalyzes the 1,3-allylic rearrangement of the homoallylic substrate isopentenyl (IPP) to its highly electrophilic allylic isomer, dimethylallyl diphosphate (DMAPP). Finally the farnesyl diphosphate synthase erg20 (AFUA_5G02450) catalyzes the sequential condensation of isopentenyl pyrophosphate with dimethylallyl pyrophosphate, and then with the resultant geranylpyrophosphate to the ultimate product farnesyl pyrophosphate. This Aspergillus fumigatus (strain ATCC MYA-4609 / CBS 101355 / FGSC A1100 / Af293) (Neosartorya fumigata) protein is Diphosphomevalonate decarboxylase mvd1.